The sequence spans 704 residues: MFLFSDGLQSINNNNRRKRIVKNAYIPSRGIRKIPHLSTLLPEFHICKDGKEAEAVVGWGLRPTTHKARAFAAEHQLPFIALEDGFLRSLGLGVAGYPPYSIVYDDIGIYYDTTRPSRLEQLILAADTMPSETLAQAQQAMDFILQHHLSKYNHAPELSDDHPLRSPSKPETVLIIDQTFGDMAIQYGGADASTFELMFQTALNENPQADIWVKTHPDVLCGKKQGYLTQLAQQHRVHLLAEDINPISLLQNVDKVYCVTSQMGFEALLCGKPLTTFGLPWYAGWGVSDDRHPEINRLVQTQRRATRNLLQLFAAAYLQYSRYLNPNTGEAGSLFDVIDYLATVKRKNDKLRGELYCVGMSLWKRAVAKPFFNVPSCRLKFISSTQKLARVKLSDDARILAWGNGKEAIVRFAEQHHIPLLRMEDGFIRSVGLGSNLVPPLSLVTDDMSIYFNAETPSRLEYILQNQNFDDQDFQTALKLQKMLTENHISKYNVGSSDFTAPSTDKTVILVPGQVEDDASIRYGSPQIYRNLDLLRTVRERNPNAYIIYKPHPDVVSGNRIGHISPEDAARYADQTAEQADILTCLQYADEIHTMTSLTGFEALLRGKKVSCYGLPFYAGWGLTQDLLPIPRRSRRLELWQLIAGTLIHYPDYIHPETHQAINAETAAQILIRQKNMQKNNNGLHRGCFAKKLGKIKQLYRSFK.

The protein resides in the cell inner membrane. Its function is as follows. Involved in the phospholipid modification of the capsular polysaccharide, a strong requirement for its translocation to the cell surface. The polypeptide is Capsule polysaccharide modification protein LipA (lipA) (Neisseria meningitidis serogroup B (strain ATCC BAA-335 / MC58)).